An 843-amino-acid chain; its full sequence is Glycogen phosphorylase, brain form (843 aa).

Alanine 2 is modified (N-acetylalanine). Serine 15 is subject to Phosphoserine; by PHK; in form phosphorylase A. AMP is bound by residues aspartate 43, tyrosine 197, and arginine 310. A Phosphotyrosine modification is found at tyrosine 197. Residue tyrosine 473 is modified to Phosphotyrosine. Lysine 569 provides a ligand contact to pyridoxal 5'-phosphate. Residues 677–678 (TG) form a pyridoxal 5'-phosphate region. Position 681 is an N6-(pyridoxal phosphate)lysine (lysine 681).

The protein belongs to the glycogen phosphorylase family. In terms of assembly, homodimer. Dimers associate into a tetramer to form the enzymatically active phosphorylase A. The cofactor is pyridoxal 5'-phosphate. Phosphorylation of Ser-15 converts phosphorylase B (unphosphorylated) to phosphorylase A.

The enzyme catalyses [(1-&gt;4)-alpha-D-glucosyl](n) + phosphate = [(1-&gt;4)-alpha-D-glucosyl](n-1) + alpha-D-glucose 1-phosphate. Activity of phosphorylase is controlled both by allosteric means (through the non-covalent binding of metabolites) and by covalent modification. Thus AMP allosterically activates, whereas ATP, ADP, and glucose-6-phosphate allosterically inhibit, phosphorylase B. Glycogen phosphorylase that regulates glycogen mobilization. Phosphorylase is an important allosteric enzyme in carbohydrate metabolism. Enzymes from different sources differ in their regulatory mechanisms and in their natural substrates. However, all known phosphorylases share catalytic and structural properties. The protein is Glycogen phosphorylase, brain form (PYGB) of Ovis aries (Sheep).